The sequence spans 654 residues: RING finger protein 112 (654 aa).

The RING-type zinc finger occupies Cys80–Arg121. The interval Ala154 to Glu654 is interaction with ZBTB16. Residues Asp189–Pro420 form the GB1/RHD3-type G domain. Arg340–Asp341 is a binding site for GTP. Transmembrane regions (helical) follow at residues Leu570–Gly590 and Gly603–Val623.

The protein belongs to the TRAFAC class dynamin-like GTPase superfamily. GB1/RHD3 GTPase family. GB1 subfamily. Self-associates. Interacts with SP1 in an oxidative stress-regulated manner. Interacts with SIGMAR1 in an oxidative stress-regulated manner. Interacts with ZBTB16 (via C2H2-type zinc finger domains 1 and 2). Post-translationally, auto-ubiquitinated. As to expression, expressed in most of the brain areas, including cortex, striatum, hippocampus, thalamus, and cerebellum (at protein level). Expressed in lateral amygdaloid nucleus, and ventromedial hypothalamus. Also expressed strongly in the marginal zone of brain vesicles, optic stalk, and cartilage primordium.

It localises to the membrane. The protein resides in the cytoplasm. It is found in the nucleus. Its subcellular location is the nuclear body. The protein localises to the nucleoplasm. It localises to the endosome. The protein resides in the cytoplasmic vesicle. It is found in the secretory vesicle. Its subcellular location is the synaptic vesicle. The protein localises to the postsynaptic density. It localises to the perikaryon. The protein resides in the cell projection. It is found in the neuron projection. The catalysed reaction is S-ubiquitinyl-[E2 ubiquitin-conjugating enzyme]-L-cysteine + [acceptor protein]-L-lysine = [E2 ubiquitin-conjugating enzyme]-L-cysteine + N(6)-ubiquitinyl-[acceptor protein]-L-lysine.. The protein operates within protein modification; protein ubiquitination. In terms of biological role, E3 ubiquitin-protein ligase that plays an important role in neuronal differentiation, including neurogenesis and gliogenesis, during brain development. During embryonic development initiates neuronal differentiation by inducing cell cycle arrest at the G0/G1 phase through up-regulation of cell-cycle regulatory proteins. Plays a role not only in the fetal period during the development of the nervous system, but also in the adult brain, where it is involved in the maintenance of neural functions and protection of the nervous tissue cells from oxidative stress-induced damage. Exhibits GTPase and E3 ubiquitin-protein ligase activities. Regulates dendritic spine density and synaptic neurotransmission; its ability to hydrolyze GTP is involved in the maintenance of dendritic spine density. This Mus musculus (Mouse) protein is RING finger protein 112 (Rnf112).